The primary structure comprises 488 residues: Erythromycin resistance ATP-binding protein MsrA (488 aa).

An ABC transporter 1 domain is found at 6-199 (IKFNQINHKL…NQYEQEQLEQ (194 aa)). ATP is bound at residue 38-45 (GGNGTGKT). Positions 200–298 (QRKYEQYISE…KIYDIHNNYP (99 aa)) are Q-linker, rich in Glu and hydrophilic AA. The segment at 211 to 255 (QRLSQASKAKRNQAQQMAQASSKQKNKSIAPDRLSASKEKGTVEK) is disordered. Residues 222-233 (NQAQQMAQASSK) show a composition bias toward low complexity. A compositionally biased stretch (basic and acidic residues) spans 245 to 255 (SASKEKGTVEK). The region spanning 299-487 (IIAQNLTLVK…ELTGQSIHDI (189 aa)) is the ABC transporter 2 domain. An ATP-binding site is contributed by 331 to 338 (GANGVGKT).

The protein belongs to the ABC transporter superfamily.

Confers resistance to 14-membered ring macrolides (like erythromycin) and to B streptogramins, by acting as an ATP-dependent efflux pump. This chain is Erythromycin resistance ATP-binding protein MsrA (msrA), found in Staphylococcus epidermidis.